A 346-amino-acid polypeptide reads, in one-letter code: Ribosomal RNA small subunit methyltransferase H (346 aa).

S-adenosyl-L-methionine is bound by residues 46–48 (GGY), aspartate 63, phenylalanine 90, aspartate 113, and glutamine 120. The interval 270-346 (GGSAGSRHMP…LPETNELARS (77 aa)) is disordered.

The protein belongs to the methyltransferase superfamily. RsmH family.

The protein resides in the cytoplasm. The catalysed reaction is cytidine(1402) in 16S rRNA + S-adenosyl-L-methionine = N(4)-methylcytidine(1402) in 16S rRNA + S-adenosyl-L-homocysteine + H(+). Specifically methylates the N4 position of cytidine in position 1402 (C1402) of 16S rRNA. This chain is Ribosomal RNA small subunit methyltransferase H, found in Brucella suis (strain ATCC 23445 / NCTC 10510).